An 80-amino-acid polypeptide reads, in one-letter code: uncharacterized protein (80 aa).

This is an uncharacterized protein from Shigella flexneri.